A 426-amino-acid chain; its full sequence is 3-phosphoshikimate 1-carboxyvinyltransferase (426 aa).

Positions 22, 23, and 27 each coordinate 3-phosphoshikimate. Lys-22 provides a ligand contact to phosphoenolpyruvate. Phosphoenolpyruvate contacts are provided by Gly-96 and Arg-124. 3-phosphoshikimate-binding residues include Ser-170, Ser-171, Gln-172, Ser-198, Asp-314, Asn-337, and Lys-341. Residue Gln-172 coordinates phosphoenolpyruvate. The active-site Proton acceptor is the Asp-314. Positions 345, 387, and 412 each coordinate phosphoenolpyruvate.

It belongs to the EPSP synthase family. As to quaternary structure, monomer.

The protein resides in the cytoplasm. It carries out the reaction 3-phosphoshikimate + phosphoenolpyruvate = 5-O-(1-carboxyvinyl)-3-phosphoshikimate + phosphate. The protein operates within metabolic intermediate biosynthesis; chorismate biosynthesis; chorismate from D-erythrose 4-phosphate and phosphoenolpyruvate: step 6/7. Its function is as follows. Catalyzes the transfer of the enolpyruvyl moiety of phosphoenolpyruvate (PEP) to the 5-hydroxyl of shikimate-3-phosphate (S3P) to produce enolpyruvyl shikimate-3-phosphate and inorganic phosphate. The chain is 3-phosphoshikimate 1-carboxyvinyltransferase from Colwellia psychrerythraea (strain 34H / ATCC BAA-681) (Vibrio psychroerythus).